Reading from the N-terminus, the 453-residue chain is Ribosome biogenesis protein SSF2 (453 aa).

Basic residues predominate over residues 1-11; sequence MAKRRQKKRTH. 3 disordered regions span residues 1-22, 275-327, and 373-453; these read MAKR…ERDI, KAKH…KAIK, and AKMR…SEVE. The Brix domain occupies 26–348; sequence MVIRVGQTSL…LVKIEDGICS (323 aa). Positions 373-398 are enriched in basic and acidic residues; it reads AKMRLKEQRRKEQEENIAKKKAVKDA. A compositionally biased stretch (basic residues) spans 399-409; that stretch reads KKQRKLERRKA. The segment covering 440–453 has biased composition (acidic residues); that stretch reads VPEDLDSDLFSEVE.

Part of a complex that includes BRX1, RPF1, RPF2 and SSF1 or SSF2.

It is found in the nucleus. It localises to the nucleolus. In terms of biological role, required for biogenesis of the 60S ribosomal subunit. The protein is Ribosome biogenesis protein SSF2 (SSF2) of Saccharomyces cerevisiae (strain ATCC 204508 / S288c) (Baker's yeast).